The sequence spans 248 residues: ATP synthase subunit a, chloroplastic (248 aa).

Helical transmembrane passes span 35–55, 94–114, 133–153, 202–222, and 224–244; these read GQVFIVSWLVMIVLISLAIAG, IPYISTIFLFILGSNWAGALI, INTTVALALLTSLAYFYAGLS, VFTLLVPILIPLPVMILGLFA, and SIQALIFSTLSAAYIGEALEG.

Belongs to the ATPase A chain family. F-type ATPases have 2 components, CF(1) - the catalytic core - and CF(0) - the membrane proton channel. CF(1) has five subunits: alpha(3), beta(3), gamma(1), delta(1), epsilon(1). CF(0) has four main subunits: a, b, b' and c.

The protein localises to the plastid. It is found in the chloroplast thylakoid membrane. In terms of biological role, key component of the proton channel; it plays a direct role in the translocation of protons across the membrane. The sequence is that of ATP synthase subunit a, chloroplastic from Antithamnion sp. (Red alga).